We begin with the raw amino-acid sequence, 174 residues long: Heat shock protein 22 (174 aa).

Positions 44 to 154 (QIARWQEQEF…TLKEREVTIE (111 aa)) constitute a sHSP domain. Threonine 152 is subject to Phosphothreonine. Residues 152-174 (TIEQTGEPAKKSAEEPNDKAASQ) form a disordered region. The span at 159–174 (PAKKSAEEPNDKAASQ) shows a compositional bias: basic and acidic residues.

Belongs to the small heat shock protein (HSP20) family.

The polypeptide is Heat shock protein 22 (Hsp22) (Drosophila melanogaster (Fruit fly)).